The following is a 382-amino-acid chain: MKIIIAPDSFKESLSALEAAEAIERGFKSVFPGADYRKLPVADGGEGTVQSLVDATNGRIIEQVVTGPLGEPVRAFFGMMGDGRTAVIEMAAASGLHLVPVDKRNPLITTTRGTGELIGAALDAGAERLIIGIGGSATNDGGAGMIQALGGRLLDNSGSEIGPGGGALSQLASIDVSGLDSRLRNVKLEVACDVDNPLTGPKGATAVFGPQKGATADMLDVLDQNVSHFADMAEKALGSTFRDTEGAGAAGGLGWSLLTYLQADLKRGIDIVLEAVDFESIVQDADLVITGEGRIDSQTVHGKTPIGVAKAAKSYDVPVIGIAGSISRDSNAVYQHGIDALFSIVPGAVPLEDAFEHAAEYMERTARDIAASIKLAKTMFLI.

This sequence belongs to the glycerate kinase type-1 family.

The enzyme catalyses (R)-glycerate + ATP = (2R)-3-phosphoglycerate + ADP + H(+). In Bacillus subtilis (strain 168), this protein is Glycerate kinase (glxK).